We begin with the raw amino-acid sequence, 250 residues long: Ubiquinone/menaquinone biosynthesis C-methyltransferase UbiE (250 aa).

S-adenosyl-L-methionine contacts are provided by residues Thr73, Asp94, 122 to 123, and Ser139; that span reads NA.

It belongs to the class I-like SAM-binding methyltransferase superfamily. MenG/UbiE family.

It catalyses the reaction a 2-demethylmenaquinol + S-adenosyl-L-methionine = a menaquinol + S-adenosyl-L-homocysteine + H(+). The catalysed reaction is a 2-methoxy-6-(all-trans-polyprenyl)benzene-1,4-diol + S-adenosyl-L-methionine = a 5-methoxy-2-methyl-3-(all-trans-polyprenyl)benzene-1,4-diol + S-adenosyl-L-homocysteine + H(+). The protein operates within quinol/quinone metabolism; menaquinone biosynthesis; menaquinol from 1,4-dihydroxy-2-naphthoate: step 2/2. Its pathway is cofactor biosynthesis; ubiquinone biosynthesis. Functionally, methyltransferase required for the conversion of demethylmenaquinol (DMKH2) to menaquinol (MKH2) and the conversion of 2-polyprenyl-6-methoxy-1,4-benzoquinol (DDMQH2) to 2-polyprenyl-3-methyl-6-methoxy-1,4-benzoquinol (DMQH2). The polypeptide is Ubiquinone/menaquinone biosynthesis C-methyltransferase UbiE (Francisella tularensis subsp. tularensis (strain WY96-3418)).